Reading from the N-terminus, the 550-residue chain is Probable importin subunit alpha-A (550 aa).

Positions 1–30 (MSSRDKQDSRKKEFKKSLDSETARRKREEN) are enriched in basic and acidic residues. The tract at residues 1–34 (MSSRDKQDSRKKEFKKSLDSETARRKREENSIGI) is disordered. The region spanning 1-56 (MSSRDKQDSRKKEFKKSLDSETARRKREENSIGIRKNAREELMLKRRGIVQPNPST) is the IBB domain. ARM repeat units lie at residues 116–155 (YPPI…NIAS), 158–198 (NRQT…NIAG), 201–241 (VDSR…KIGL), 256–297 (KPQP…YLCD), 300–339 (NTKI…NIVT), 342–381 (SSQT…NITA), 385–424 (SQID…NSTN), and 428–467 (TKSI…NIIK).

This sequence belongs to the importin alpha family. In terms of assembly, forms a complex with tnpo/importin subunit beta.

The protein resides in the cytoplasm. The protein localises to the nucleus envelope. Functions in nuclear protein import via a substrate-importin alpha-beta transport complex that passes though the nuclear pore complexes (NPC). Binds specifically and directly to substrates containing either a simple or bipartite NLS motif. The chain is Probable importin subunit alpha-A from Dictyostelium discoideum (Social amoeba).